The sequence spans 426 residues: MGVLCFLASFWLALVGGAIADNAERYSANLSSHVEDFTPFPGTEFNFLGTTLQPPNLALPSNGSMHGYCPQQTKITTAFKYINTVISCTIFIVGMVGNATLLRIIYQNKCMRNGPNALIASLALGDLIYVVIDLPINVFKLLAGRWPFDHNDFGVFLCKLFPFLQKSSVGITVLNLCALSVDRYRAVASWSRVQGIGIPLITAIEIVSIWILSFILAIPEAIGFVMVPFEYKGEQHRTCMLNATTKFMEFYQDVKDWWLFGFYFCMPLVCTAIFYTLMTCEMLNRRNGSLRIALSEHLKQRREVAKTVFCLVVIFALCWFPLHLSRILKKTVYDEMDKNRCELLSFLLLMDYIGINLATMNSCINPIALYFVSKKFKNCFQSCLCCCCHQSKSLMTSVPMNGTSIQWKNQEQNHNTERSSHKDSMN.

An N-terminal signal peptide occupies residues 1 to 20 (MGVLCFLASFWLALVGGAIA). Topologically, residues 21-80 (DNAERYSANLSSHVEDFTPFPGTEFNFLGTTLQPPNLALPSNGSMHGYCPQQTKITTAFK) are extracellular. N-linked (GlcNAc...) asparagine glycans are attached at residues asparagine 29 and asparagine 62. A helical transmembrane segment spans residues 81-102 (YINTVISCTIFIVGMVGNATLL). The Cytoplasmic portion of the chain corresponds to 103-112 (RIIYQNKCMR). Residues 113-132 (NGPNALIASLALGDLIYVVI) form a helical membrane-spanning segment. Topologically, residues 133 to 159 (DLPINVFKLLAGRWPFDHNDFGVFLCK) are extracellular. A disulfide bridge connects residues cysteine 158 and cysteine 239. A helical membrane pass occupies residues 160–181 (LFPFLQKSSVGITVLNLCALSV). The Cytoplasmic segment spans residues 182 to 205 (DRYRAVASWSRVQGIGIPLITAIE). A helical transmembrane segment spans residues 206–229 (IVSIWILSFILAIPEAIGFVMVPF). The Extracellular portion of the chain corresponds to 230 to 256 (EYKGEQHRTCMLNATTKFMEFYQDVKD). The chain crosses the membrane as a helical span at residues 257–278 (WWLFGFYFCMPLVCTAIFYTLM). Topologically, residues 279–306 (TCEMLNRRNGSLRIALSEHLKQRREVAK) are cytoplasmic. A helical membrane pass occupies residues 307 to 328 (TVFCLVVIFALCWFPLHLSRIL). Residues 329-347 (KKTVYDEMDKNRCELLSFL) are Extracellular-facing. The helical transmembrane segment at 348 to 372 (LLMDYIGINLATMNSCINPIALYFV) threads the bilayer. Over 373 to 426 (SKKFKNCFQSCLCCCCHQSKSLMTSVPMNGTSIQWKNQEQNHNTERSSHKDSMN) the chain is Cytoplasmic. Serine 424 bears the Phosphoserine mark.

This sequence belongs to the G-protein coupled receptor 1 family. Endothelin receptor subfamily. EDNRA sub-subfamily. As to quaternary structure, interacts with HDAC7 and KAT5. In terms of tissue distribution, predominantly expressed in vascular smooth muscle cells of a variety of issues, bronchial smooth muscle cells, myocardium, and the pituitary gland.

Its subcellular location is the cell membrane. Receptor for endothelin-1. Mediates its action by association with G proteins that activate a phosphatidylinositol-calcium second messenger system. The rank order of binding affinities for ET-A is: ET1 &gt; ET2 &gt;&gt; ET3. The polypeptide is Endothelin-1 receptor (Rattus norvegicus (Rat)).